The sequence spans 240 residues: Guanylate kinase (240 aa).

Residues 56–236 (GRIFVITGPS…TLNELKSILL (181 aa)) enclose the Guanylate kinase-like domain. ATP is bound at residue 63–70 (GPSGVGKS).

The protein belongs to the guanylate kinase family.

Its subcellular location is the cytoplasm. It carries out the reaction GMP + ATP = GDP + ADP. Functionally, essential for recycling GMP and indirectly, cGMP. The chain is Guanylate kinase (gmk) from Mycoplasma genitalium (strain ATCC 33530 / DSM 19775 / NCTC 10195 / G37) (Mycoplasmoides genitalium).